We begin with the raw amino-acid sequence, 140 residues long: Required for drug-induced death protein 1 (140 aa).

The tract at residues 1–95 (MTVGARLRSK…DKPKKRYRRK (95 aa)) is disordered. The segment covering 29-53 (EETDAIVEHLEGEDEDPESQDCERE) has biased composition (acidic residues). The chain crosses the membrane as a helical span at residues 118–140 (LQGFAAAYSAPFGVATSVVSFVR).

The protein localises to the membrane. Functionally, regulates drug efflux through modulation of ABCB1 localization and activity. The polypeptide is Required for drug-induced death protein 1 (Rattus norvegicus (Rat)).